Reading from the N-terminus, the 335-residue chain is MNFKKLPKIELHCHLDGSLRVDTILDIAKKDNIPLPSYNKKELINYVSIMDDCNSLDEYLNKFFIPNKVMQTKENLKRIAFELLEDVAADNVKYIEVRFAPLLHVEKGLNIEEIIESVLEGIKEAEKLYDIKGNLILGCMRNMDIPSAFEVVKKGAKFIGKGVVAIDLCAGEEPHFPGKYIEVLKLAKEYGYRITIHAGEAGVGENVLEAINLLNAERIGHGIYIKDCAEAYKLVKEKNIPLEMCPTSNLHTKASESYEAHPFMDFLKDGIKVTINTDNMTVSNTTITKELEMLNKFCGLSIEDYKILYLNAVEASFASSETKEVLKSYVKEITA.

The Zn(2+) site is built by H12 and H14. Residues H14 and D16 each coordinate substrate. H197 contributes to the Zn(2+) binding site. E200 functions as the Proton donor in the catalytic mechanism. D278 contacts Zn(2+).

The protein belongs to the metallo-dependent hydrolases superfamily. Adenosine and AMP deaminases family. Adenosine deaminase subfamily. Zn(2+) is required as a cofactor.

It carries out the reaction adenosine + H2O + H(+) = inosine + NH4(+). The enzyme catalyses 2'-deoxyadenosine + H2O + H(+) = 2'-deoxyinosine + NH4(+). In terms of biological role, catalyzes the hydrolytic deamination of adenosine and 2-deoxyadenosine. This is Adenosine deaminase from Clostridium botulinum (strain Okra / Type B1).